We begin with the raw amino-acid sequence, 124 residues long: Small ribosomal subunit protein uS13 (124 aa).

The disordered stretch occupies residues 87-124 (GSYRGNRHRKRLPVRGQRTKTNSRTRKGKRRTVGSKTK). A compositionally biased stretch (basic residues) spans 91 to 124 (GNRHRKRLPVRGQRTKTNSRTRKGKRRTVGSKTK).

It belongs to the universal ribosomal protein uS13 family. Part of the 30S ribosomal subunit. Forms a loose heterodimer with protein S19. Forms two bridges to the 50S subunit in the 70S ribosome.

In terms of biological role, located at the top of the head of the 30S subunit, it contacts several helices of the 16S rRNA. In the 70S ribosome it contacts the 23S rRNA (bridge B1a) and protein L5 of the 50S subunit (bridge B1b), connecting the 2 subunits; these bridges are implicated in subunit movement. Contacts the tRNAs in the A and P-sites. In Elusimicrobium minutum (strain Pei191), this protein is Small ribosomal subunit protein uS13.